Consider the following 225-residue polypeptide: Ribosome maturation factor RimM (225 aa).

Residues alanine 144–tyrosine 225 enclose the PRC barrel domain.

This sequence belongs to the RimM family. Binds ribosomal protein uS19.

The protein resides in the cytoplasm. In terms of biological role, an accessory protein needed during the final step in the assembly of 30S ribosomal subunit, possibly for assembly of the head region. Essential for efficient processing of 16S rRNA. May be needed both before and after RbfA during the maturation of 16S rRNA. It has affinity for free ribosomal 30S subunits but not for 70S ribosomes. The polypeptide is Ribosome maturation factor RimM (Burkholderia ambifaria (strain MC40-6)).